A 261-amino-acid polypeptide reads, in one-letter code: 5'-nucleotidase SurE (261 aa).

Positions 8, 9, 39, and 91 each coordinate a divalent metal cation.

This sequence belongs to the SurE nucleotidase family. The cofactor is a divalent metal cation.

The protein localises to the cytoplasm. The catalysed reaction is a ribonucleoside 5'-phosphate + H2O = a ribonucleoside + phosphate. Its function is as follows. Nucleotidase that shows phosphatase activity on nucleoside 5'-monophosphates. The protein is 5'-nucleotidase SurE of Polaromonas sp. (strain JS666 / ATCC BAA-500).